Consider the following 230-residue polypeptide: Octanoyltransferase (230 aa).

Positions 38–215 (AGGADTLLLL…AVCAALDGVL (178 aa)) constitute a BPL/LPL catalytic domain. Residues 76–83 (RGGKITWH), 145–147 (AIG), and 158–160 (GFA) contribute to the substrate site. Cysteine 176 functions as the Acyl-thioester intermediate in the catalytic mechanism.

The protein belongs to the LipB family.

It is found in the cytoplasm. It catalyses the reaction octanoyl-[ACP] + L-lysyl-[protein] = N(6)-octanoyl-L-lysyl-[protein] + holo-[ACP] + H(+). It functions in the pathway protein modification; protein lipoylation via endogenous pathway; protein N(6)-(lipoyl)lysine from octanoyl-[acyl-carrier-protein]: step 1/2. Catalyzes the transfer of endogenously produced octanoic acid from octanoyl-acyl-carrier-protein onto the lipoyl domains of lipoate-dependent enzymes. Lipoyl-ACP can also act as a substrate although octanoyl-ACP is likely to be the physiological substrate. The polypeptide is Octanoyltransferase (Mycobacterium bovis (strain BCG / Tokyo 172 / ATCC 35737 / TMC 1019)).